We begin with the raw amino-acid sequence, 302 residues long: UDP-3-O-acyl-N-acetylglucosamine deacetylase (302 aa).

Zn(2+) is bound by residues His82, His238, and Asp242. The active-site Proton donor is the His265.

The protein belongs to the LpxC family. Zn(2+) is required as a cofactor.

The catalysed reaction is a UDP-3-O-[(3R)-3-hydroxyacyl]-N-acetyl-alpha-D-glucosamine + H2O = a UDP-3-O-[(3R)-3-hydroxyacyl]-alpha-D-glucosamine + acetate. It functions in the pathway glycolipid biosynthesis; lipid IV(A) biosynthesis; lipid IV(A) from (3R)-3-hydroxytetradecanoyl-[acyl-carrier-protein] and UDP-N-acetyl-alpha-D-glucosamine: step 2/6. In terms of biological role, catalyzes the hydrolysis of UDP-3-O-myristoyl-N-acetylglucosamine to form UDP-3-O-myristoylglucosamine and acetate, the committed step in lipid A biosynthesis. The sequence is that of UDP-3-O-acyl-N-acetylglucosamine deacetylase from Leptospira biflexa serovar Patoc (strain Patoc 1 / Ames).